Reading from the N-terminus, the 838-residue chain is Probable bifunctional folylpolyglutamate synthase/dihydropteroate synthase (838 aa).

The folylpolyglutamate synthase stretch occupies residues 1 to 418 (MEYHEAVNFL…LVVGSLYVVA (418 aa)). An ATP-binding site is contributed by 46-52 (GSNGKGS). The tract at residues 541 to 561 (AADAGEDDERGAGDASDAGHD) is disordered. The Pterin-binding domain occupies 569 to 819 (TAVMGILNVT…DVPENVAAVN (251 aa)). The segment at 571–838 (VMGILNVTPN…RFEADAERED (268 aa)) is DHPS. Residue Asn-576 participates in Mg(2+) binding. (7,8-dihydropterin-6-yl)methyl diphosphate is bound by residues Thr-616, Asp-649, Asn-668, Asp-738, Lys-774, and 807 to 809 (RVH).

In the N-terminal section; belongs to the folylpolyglutamate synthase family. It in the C-terminal section; belongs to the DHPS family. The cofactor is Mg(2+).

It catalyses the reaction (6S)-5,6,7,8-tetrahydrofolyl-(gamma-L-Glu)(n) + L-glutamate + ATP = (6S)-5,6,7,8-tetrahydrofolyl-(gamma-L-Glu)(n+1) + ADP + phosphate + H(+). It carries out the reaction (7,8-dihydropterin-6-yl)methyl diphosphate + 4-aminobenzoate = 7,8-dihydropteroate + diphosphate. The protein operates within cofactor biosynthesis; tetrahydrofolylpolyglutamate biosynthesis. Its pathway is cofactor biosynthesis; tetrahydrofolate biosynthesis; 7,8-dihydrofolate from 2-amino-4-hydroxy-6-hydroxymethyl-7,8-dihydropteridine diphosphate and 4-aminobenzoate: step 1/2. In terms of biological role, can complement an H.volcanii mutant strain that is thymidine auxotroph because it lacks the two dihydrofolate reductase genes encoded by hdrA and hdrB. This chain is Probable bifunctional folylpolyglutamate synthase/dihydropteroate synthase (folCP), found in Haloferax volcanii (strain ATCC 29605 / DSM 3757 / JCM 8879 / NBRC 14742 / NCIMB 2012 / VKM B-1768 / DS2) (Halobacterium volcanii).